Here is a 349-residue protein sequence, read N- to C-terminus: Tetraacyldisaccharide 4'-kinase (349 aa).

Residue 58–65 (TAGGSGKT) coordinates ATP.

Belongs to the LpxK family.

The enzyme catalyses a lipid A disaccharide + ATP = a lipid IVA + ADP + H(+). Its pathway is glycolipid biosynthesis; lipid IV(A) biosynthesis; lipid IV(A) from (3R)-3-hydroxytetradecanoyl-[acyl-carrier-protein] and UDP-N-acetyl-alpha-D-glucosamine: step 6/6. Transfers the gamma-phosphate of ATP to the 4'-position of a tetraacyldisaccharide 1-phosphate intermediate (termed DS-1-P) to form tetraacyldisaccharide 1,4'-bis-phosphate (lipid IVA). In Shewanella amazonensis (strain ATCC BAA-1098 / SB2B), this protein is Tetraacyldisaccharide 4'-kinase.